The primary structure comprises 493 residues: MWLIRAIVPVRYLGSYKRPQKPPWMRNPVVFYSDFSEKKGKVAPLQETRMRDRFTLYARGGEGGSGCSSVRRSRADRYGKPDGGNGGRGGDVILECTHAVWDFSGLQPHIKGGKAGHGTSKNRIGNRGEDKVLLVPIGTVIHLQEGEIPSQVENESPKDLDPWDLPGSLVEDPASEENSDVHQETMSESDQDDTEQESLTRQLGMPKEADFEDDDEEIDQIRYNVAELTQQGQRVIIARGGEGGLGNVSATRYVRGSKFAKSTIRQTNLRSMEDDAEEDDERSSIKAGLLGSEAVLILELKSIADVGLVGMPNAGKSTLLGALSRAKPRVGHYAFTTLRPNLGNVNYDDFSMTVADIPGLIKGAHQNRGLGHNFLRHIERTKVLAYVVDLASGLDGCEGLTPWQQLRDLVMELEFHEEGLSDRSSLIVANKIDEEGAEERLKELKRRVKGVKIFPVCAVLEEGVAELKDGLKMLVDGNGEPSERLKLENICVD.

The transit peptide at Met-1 to Pro-28 directs the protein to the mitochondrion. Residues Thr-48–Ile-303 enclose the Obg domain. Disordered stretches follow at residues Ser-65–Gly-89 and Gly-146–Asp-215. Over residues Ser-187–Gln-196 the composition is skewed to acidic residues. An OBG-type G domain is found at Ala-304–Asp-476. GTP-binding positions include Gly-310–Ser-317 and Asp-356–Leu-360.

Belongs to the TRAFAC class OBG-HflX-like GTPase superfamily. OBG GTPase family.

Its subcellular location is the mitochondrion. In terms of biological role, may bind GTP and have GTPase activity. This is Probable GTP-binding protein OBGM, mitochondrial (ATOBGM) from Arabidopsis thaliana (Mouse-ear cress).